Here is a 430-residue protein sequence, read N- to C-terminus: Methylthioribose kinase 1 (430 aa).

ATP contacts are provided by residues 52 to 56, lysine 71, and 125 to 127; these read DGNLN and RYI. Asparagine 56 serves as a coordination point for substrate. Aspartate 246 contributes to the substrate binding site. Residue 263 to 265 coordinates ATP; sequence DPE. Arginine 373 contacts substrate.

It belongs to the methylthioribose kinase family. As to quaternary structure, homodimer.

The enzyme catalyses 5-(methylsulfanyl)-D-ribose + ATP = 5-(methylsulfanyl)-alpha-D-ribose 1-phosphate + ADP + H(+). It functions in the pathway amino-acid biosynthesis; L-methionine biosynthesis via salvage pathway; S-methyl-5-thio-alpha-D-ribose 1-phosphate from S-methyl-5'-thioadenosine (hydrolase route): step 2/2. Functionally, catalyzes the phosphorylation of methylthioribose into methylthioribose-1-phosphate. In Oryza sativa subsp. japonica (Rice), this protein is Methylthioribose kinase 1.